The primary structure comprises 546 residues: CTP synthase (546 aa).

Residues 1-269 (MRSKKTKFIF…DERLAEVLNI (269 aa)) are amidoligase domain. Ser17 contributes to the CTP binding site. Ser17 is a UTP binding site. Residues 18 to 23 (SLGKGL) and Asp75 each bind ATP. Residues Asp75 and Glu143 each contribute to the Mg(2+) site. CTP-binding positions include 150-152 (DIE), 190-195 (KTKPTQ), and Lys226. UTP is bound by residues 190-195 (KTKPTQ) and Lys226. A Glutamine amidotransferase type-1 domain is found at 295–537 (RIAIVGKYVN…IRAALAQRDA (243 aa)). Gly357 is a binding site for L-glutamine. Cys384 (nucleophile; for glutamine hydrolysis) is an active-site residue. L-glutamine contacts are provided by residues 385–388 (LGLQ), Glu408, and Arg465. Residues His510 and Glu512 contribute to the active site.

It belongs to the CTP synthase family. As to quaternary structure, homotetramer.

The enzyme catalyses UTP + L-glutamine + ATP + H2O = CTP + L-glutamate + ADP + phosphate + 2 H(+). It carries out the reaction L-glutamine + H2O = L-glutamate + NH4(+). It catalyses the reaction UTP + NH4(+) + ATP = CTP + ADP + phosphate + 2 H(+). The protein operates within pyrimidine metabolism; CTP biosynthesis via de novo pathway; CTP from UDP: step 2/2. Its activity is regulated as follows. Allosterically activated by GTP, when glutamine is the substrate; GTP has no effect on the reaction when ammonia is the substrate. The allosteric effector GTP functions by stabilizing the protein conformation that binds the tetrahedral intermediate(s) formed during glutamine hydrolysis. Inhibited by the product CTP, via allosteric rather than competitive inhibition. Functionally, catalyzes the ATP-dependent amination of UTP to CTP with either L-glutamine or ammonia as the source of nitrogen. Regulates intracellular CTP levels through interactions with the four ribonucleotide triphosphates. In Myxococcus xanthus (strain DK1622), this protein is CTP synthase.